Reading from the N-terminus, the 556-residue chain is Arginine--tRNA ligase (556 aa).

A 'HIGH' region motif is present at residues 132–142 (ANPTGSLHLGH).

This sequence belongs to the class-I aminoacyl-tRNA synthetase family. As to quaternary structure, monomer.

Its subcellular location is the cytoplasm. The enzyme catalyses tRNA(Arg) + L-arginine + ATP = L-arginyl-tRNA(Arg) + AMP + diphosphate. The protein is Arginine--tRNA ligase of Anoxybacillus flavithermus (strain DSM 21510 / WK1).